Reading from the N-terminus, the 692-residue chain is MFYLRGCGRWVAASFTKQQFPLVRLSSDSAAPRTPHFDVIVIGGGHAGTEAATAAARCGSRTLLLTHRVDTIGQMSCNPSFGGIGKGHLMREVDALDGLCSRICDQSGVHYKVLNRRKGPAVWGLRAQIDRKLYKQNMQKEILNTPLLTVQEGAVEDLILTEPEPEHTGKCRVSGVVLVDGSTVYAESVILTTGTFLRGMIVIGLEMHPAGRLGDQPSIGLAQTLEKLGFVVGRLKTGTPPRIAKDSINFSILNKQTPDNPSVPFSFTNETVWIKPEDQLPCYLTYTNPRVDEIVLNNLHLNSHVKETTRGPRYCPSIESKVLRFPNRLHQVWLEPEGMDSDLIYPQGLSMTLPTELQEKMITCIRGLEKAKVIQPGYGVQYDYLDPRQITPSLETHLVQRLFFAGQINGTTGYEEAAAQGVIAGINASLRVSRKPPFVVSRTEGYIGVLIDDLTTLGTSEPYRMFTSRVEFRLSLRPDNADIRLTLRGYKDAGCVSQQRYERACWMKSSLEEGISVLKSIEFSSSKWKNLIPEVSISTSRSLPVRALDVLKYEEVDMDSLAKAVPEPLKKYTKCRELAERLKIEATYESVLFHQLQEIKGVQQDEALQLPKDIDYLTIRDVSLSHEVREKLHFSRPQTIGAASRIPGVTPAAIINLLRFVKTTQQRQAAMNESPKTDQCLRNADRLQERQL.

The N-terminal 25 residues, 1–25 (MFYLRGCGRWVAASFTKQQFPLVRL), are a transit peptide targeting the mitochondrion. Residues 43-48 (GGGHAG), V155, S218, and Q407 each bind FAD. An N6-methyllysine modification is found at K508. The tract at residues 669–692 (AAMNESPKTDQCLRNADRLQERQL) is disordered. Over residues 683–692 (NADRLQERQL) the composition is skewed to basic and acidic residues.

It belongs to the MnmG family. Homodimer; forms a dimer in the presence of potassium. Interacts with GTPBP3; forms the GTPBP3-MTO1 complex composed of homodimers of GTPBP3 and MTO1. FAD serves as cofactor.

It is found in the mitochondrion. It catalyses the reaction 5,10-methylenetetrahydrofolate + uridine(34) in tRNA + taurine + GTP + A + H2O = 5-taurinomethyluridine(34) in tRNA + 7,8-dihydrofolate + GDP + AH2 + phosphate + H(+). Component of the GTPBP3-MTO1 complex that catalyzes the 5-taurinomethyluridine (taum(5)U) modification at the 34th wobble position (U34) of mitochondrial tRNAs (mt-tRNAs), which plays a role in mt-tRNA decoding and mitochondrial translation. Taum(5)U formation on mammalian mt-tRNA requires the presence of both GTPBP3-mediated GTPase activity and MTO1 catalytic activity. In Macaca fascicularis (Crab-eating macaque), this protein is 5-taurinomethyluridine-[tRNA] synthase subunit MTO1, mitochondrial (MTO1).